Here is a 230-residue protein sequence, read N- to C-terminus: Prolactin-6A1 (230 aa).

Residues M1–P29 form the signal peptide. N57 carries N-linked (GlcNAc...) asparagine glycosylation. Disulfide bonds link C89–C205 and C222–C230.

The protein belongs to the somatotropin/prolactin family. As to expression, expressed in both placenta and decidual tissues. Detected first in deciduals cells early in gestation and in trophoblasts later in pregnancy.

It localises to the secreted. The polypeptide is Prolactin-6A1 (Prl6a1) (Mus musculus (Mouse)).